The following is a 388-amino-acid chain: Ferrochelatase (388 aa).

Fe cation-binding residues include His-196 and Glu-277.

This sequence belongs to the ferrochelatase family.

Its subcellular location is the cytoplasm. It catalyses the reaction heme b + 2 H(+) = protoporphyrin IX + Fe(2+). It functions in the pathway porphyrin-containing compound metabolism; protoheme biosynthesis; protoheme from protoporphyrin-IX: step 1/1. In terms of biological role, catalyzes the ferrous insertion into protoporphyrin IX. This chain is Ferrochelatase, found in Trichormus variabilis (strain ATCC 29413 / PCC 7937) (Anabaena variabilis).